We begin with the raw amino-acid sequence, 388 residues long: Galactokinase (388 aa).

33 to 36 (EHTD) serves as a coordination point for substrate. Residues S67 and 125 to 131 (GSGLSSS) contribute to the ATP site. S131 and E163 together coordinate Mg(2+). The active-site Proton acceptor is D175. Residue Y225 coordinates substrate.

The protein belongs to the GHMP kinase family. GalK subfamily.

Its subcellular location is the cytoplasm. The enzyme catalyses alpha-D-galactose + ATP = alpha-D-galactose 1-phosphate + ADP + H(+). It participates in carbohydrate metabolism; galactose metabolism. Catalyzes the transfer of the gamma-phosphate of ATP to D-galactose to form alpha-D-galactose-1-phosphate (Gal-1-P). This chain is Galactokinase, found in Lactobacillus helveticus (Lactobacillus suntoryeus).